A 219-amino-acid polypeptide reads, in one-letter code: Ras-related protein Rab-3 (219 aa).

Residues 29 to 37, 48 to 54, 77 to 81, 135 to 138, and 165 to 167 contribute to the GTP site; these read GNSSVGKTS, TSAFVST, DTAGQ, NKCD, and SAK. The Effector region motif lies at 51 to 59; sequence FVSTVGIDF. A disordered region spans residues 191–219; it reads LDKDPQQQPKGQKLEANPTQKPAQQQCNC. A compositionally biased stretch (polar residues) spans 207 to 219; that stretch reads NPTQKPAQQQCNC. Residues cysteine 217 and cysteine 219 are each lipidated (S-geranylgeranyl cysteine). Cysteine 219 is modified (cysteine methyl ester).

The protein belongs to the small GTPase superfamily. Rab family.

Its subcellular location is the cell membrane. Involved in exocytosis by regulating a late step in synaptic vesicle fusion. Could play a role in neurotransmitter release by regulating membrane flow in the nerve terminal. Plays a role in the recruitment of endophilin unc-57 to synaptic vesicles. Probably by controlling dense-core vesicle trafficking, plays a role in the AVG neuron-mediated formation of the right axon tract of the ventral nerve cord. This is Ras-related protein Rab-3 (rab-3) from Caenorhabditis elegans.